The primary structure comprises 240 residues: 1-(5-phosphoribosyl)-5-[(5-phosphoribosylamino)methylideneamino] imidazole-4-carboxamide isomerase (240 aa).

Catalysis depends on Asp-8, which acts as the Proton acceptor. Asp-130 acts as the Proton donor in catalysis.

Belongs to the HisA/HisF family.

Its subcellular location is the cytoplasm. The catalysed reaction is 1-(5-phospho-beta-D-ribosyl)-5-[(5-phospho-beta-D-ribosylamino)methylideneamino]imidazole-4-carboxamide = 5-[(5-phospho-1-deoxy-D-ribulos-1-ylimino)methylamino]-1-(5-phospho-beta-D-ribosyl)imidazole-4-carboxamide. The protein operates within amino-acid biosynthesis; L-histidine biosynthesis; L-histidine from 5-phospho-alpha-D-ribose 1-diphosphate: step 4/9. In Flavobacterium johnsoniae (strain ATCC 17061 / DSM 2064 / JCM 8514 / BCRC 14874 / CCUG 350202 / NBRC 14942 / NCIMB 11054 / UW101) (Cytophaga johnsonae), this protein is 1-(5-phosphoribosyl)-5-[(5-phosphoribosylamino)methylideneamino] imidazole-4-carboxamide isomerase.